A 61-amino-acid chain; its full sequence is MPSATRKNAPKGKCPICGAPTKAEFRPFCSRGCRDRDLLNWLGDAYRLPVKDLQAEDGDFD.

Positions 14, 17, 29, and 33 each coordinate Zn(2+).

Belongs to the DNA gyrase inhibitor YacG family. Interacts with GyrB. Requires Zn(2+) as cofactor.

In terms of biological role, inhibits all the catalytic activities of DNA gyrase by preventing its interaction with DNA. Acts by binding directly to the C-terminal domain of GyrB, which probably disrupts DNA binding by the gyrase. The chain is DNA gyrase inhibitor YacG from Zymomonas mobilis subsp. mobilis (strain ATCC 31821 / ZM4 / CP4).